Here is a 207-residue protein sequence, read N- to C-terminus: M-zodatoxin-Lt4a (207 aa).

Positions Met1 to Ser22 are cleaved as a signal peptide. Residues Glu23–Arg43 constitute a propeptide that is removed on maturation. The Processing quadruplet motif 1 motif lies at Glu40–Arg43. Gln61 bears the Glutamine amide mark. The Inverted processing quadruplet motif 1 signature appears at Arg63–Ser66. The propeptide occupies Arg63–Arg71. Positions Glu68–Arg71 match the Processing quadruplet motif 2 motif. A Glutamine amide modification is found at Gln89. An Inverted processing quadruplet motif 2 motif is present at residues Arg91–Ser94. The propeptide occupies Arg91 to Arg99. Positions Glu96–Arg99 match the Processing quadruplet motif 3 motif. Glutamine amide is present on Gln117. The Inverted processing quadruplet motif 3 motif lies at Arg119–Ser122. Residues Arg119–Arg127 constitute a propeptide that is removed on maturation. The Processing quadruplet motif 4 signature appears at Glu124–Arg127. Residue Gln145 is modified to Glutamine amide. The Inverted processing quadruplet motif 4 signature appears at Arg147–Ser150. A propeptide spanning residues Arg147 to Arg155 is cleaved from the precursor. Positions Glu152 to Arg155 match the Processing quadruplet motif 5 motif. At Gln173 the chain carries Glutamine amide. The Inverted processing quadruplet motif 5 signature appears at Arg175–Thr178. The propeptide occupies Arg175–Arg182. The Processing quadruplet motif 6 signature appears at Glu179–Arg182. Phe206 is subject to Phenylalanine amide.

The protein belongs to the cationic peptide 03 (latarcin) family. 04 subfamily. Cleavage of the propeptide depends on the processing quadruplet motif (PQM) (XXXR, with at least one of X being E) and the inverted PQM (RXXX, with at least one of X being E). As to expression, expressed by the venom gland.

The protein localises to the secreted. In terms of biological role, M-zodatoxin-Lt4a: Has antimicrobial activity against Gram-positive bacteria (A.globiformis VKM Ac-1112 (MIC=0.3 uM), and B.subtilis VKM B-501 (MIC=1.1 uM)), Gram-negative bacteria (E.coli DH5-alpha (MIC=4.5 uM), E.coli MH1 (MIC=3.2 uM), and P.aeruginosa PAO1 (MIC&gt;35 uM)), and yeasts (P.pastoris GS115 (MIC=36 uM), and S.cerevisiae Y190 (MIC=18 uM)). Does not have hemolytic activity against rabbit erythrocytes. Causes paralysis, but is not lethal when injected into insect (M.domestica) larvae. Functionally, shows no antimicrobial activity against Gram-positive bacterium B.subtilis B-501 or Gram-negative bacterium E.coli DH5-alpha at concentrations up to 20 uM. Its function is as follows. Shows no antimicrobial activity against Gram-positive bacterium B.subtilis B-501 or Gram-negative bacterium E.coli DH5-alpha at concentrations up to 20 uM. Shows no toxicity towards insect (S.carnaria) larvae. The polypeptide is M-zodatoxin-Lt4a (Lachesana tarabaevi (Spider)).